Reading from the N-terminus, the 956-residue chain is RNA-binding protein 44 (956 aa).

Residues 301 to 321 (DNTQNNQNQSYNPTEENDHNV) are disordered. The region spanning 750–824 (SLLCITCLPG…HAVQVVHLSG (75 aa)) is the RRM domain. The disordered stretch occupies residues 831–855 (KPSDLSHSASESHKEDTAGDELRTK). The span at 840-854 (SESHKEDTAGDELRT) shows a compositional bias: basic and acidic residues.

Its subcellular location is the cytoplasm. Component of intercellular bridges during meiosis. Intercellular bridges are evolutionarily conserved structures that connect differentiating germ cells. Not required for fertility. This is RNA-binding protein 44 (rbm44) from Danio rerio (Zebrafish).